The following is a 510-amino-acid chain: uncharacterized protein (510 aa).

Helical transmembrane passes span 17-37 (LKLGIISLGLGGLYSIILVVL), 56-76 (LIIHVNLSILIWLLSITASVW), 111-131 (VLYIYPKLAFFATLLIAISPL), 148-168 (IVFILGLSLFGVTLLLYAINI), 180-200 (LVNVTVFSTIIMFILSFVCFG), 223-243 (LLFWSGGHLLQFIYTQILIFI), 261-281 (FYLFILYLNFVFSILILFGHI), 300-320 (YLGGIAPILCLVGMVVELVLM), 355-375 (IIKTILLCSITLFLLGGLIAI), 382-402 (LVIPAHYHGSIVGISIACMGY), 434-454 (AIYLLTFGQILHILGLAFSGI), and 472-492 (LLMGMMGIGGLIAIVGGLMFV).

It to A.aeolicus AQ_155.

It is found in the cell membrane. This is an uncharacterized protein from Rickettsia prowazekii (strain Madrid E).